Consider the following 218-residue polypeptide: Ribose-5-phosphate isomerase A (218 aa).

Residues 28 to 31, 81 to 84, and 94 to 97 contribute to the substrate site; these read TGST, DGAD, and KGGG. The Proton acceptor role is filled by Glu103. Substrate is bound at residue Lys121.

It belongs to the ribose 5-phosphate isomerase family. Homodimer.

The enzyme catalyses aldehydo-D-ribose 5-phosphate = D-ribulose 5-phosphate. Its pathway is carbohydrate degradation; pentose phosphate pathway; D-ribose 5-phosphate from D-ribulose 5-phosphate (non-oxidative stage): step 1/1. Functionally, catalyzes the reversible conversion of ribose-5-phosphate to ribulose 5-phosphate. The sequence is that of Ribose-5-phosphate isomerase A from Vibrio atlanticus (strain LGP32) (Vibrio splendidus (strain Mel32)).